A 541-amino-acid polypeptide reads, in one-letter code: Thioredoxin reductase (541 aa).

FAD is bound by residues 51 to 52 (PG), 71 to 74 (DYVK), 87 to 88 (TC), 92 to 96 (GCVPK), Ala-161, Asp-357, and 364 to 366 (ELA). An intrachain disulfide couples Cys-88 to Cys-93. The loop important for the interaction with TRX1 stretch occupies residues 438-452 (HRQKHIRAQKDEYDL). His-509 contributes to the FAD binding site. Catalysis depends on His-509, which acts as the Proton acceptor. Cysteines 535 and 540 form a disulfide.

The protein belongs to the class-I pyridine nucleotide-disulfide oxidoreductase family. In terms of assembly, homodimer. It depends on FAD as a cofactor.

The protein resides in the cytoplasm. The enzyme catalyses [thioredoxin]-dithiol + NADP(+) = [thioredoxin]-disulfide + NADPH + H(+). In terms of biological role, catalyzes the transfer of electrons from NADPH to thioredoxins TRX1, TRX2 and TRX3, which in turn act as reductants of disulfide containing proteins. Able to reduce nitroglutathione (GSNO), a compound involved in the transport of nitric oxide (NO); however, TRX1 is more efficient in reducing GSNO. Has no catalytic activity towards oxidized glutathione (GSSG). The chain is Thioredoxin reductase from Plasmodium falciparum (isolate FCH-5).